The chain runs to 164 residues: Cytochrome c-type biogenesis protein CcmE (164 aa).

Residues 1 to 7 lie on the Cytoplasmic side of the membrane; the sequence is MTRKQRR. The chain crosses the membrane as a helical; Signal-anchor for type II membrane protein span at residues 8-28; the sequence is LLMIGGAGVVLVVAVGLVLNA. Over 29–164 the chain is Periplasmic; sequence MRGSIVFFST…ASADAAGPSR (136 aa). Heme contacts are provided by His122 and Tyr126. Residues 137-149 show a composition bias toward basic and acidic residues; sequence KQGHWKDDYEKKP. The interval 137–164 is disordered; sequence KQGHWKDDYEKKPPGAPGASADAAGPSR. Over residues 153 to 164 the composition is skewed to low complexity; the sequence is PGASADAAGPSR.

The protein belongs to the CcmE/CycJ family.

The protein resides in the cell inner membrane. Heme chaperone required for the biogenesis of c-type cytochromes. Transiently binds heme delivered by CcmC and transfers the heme to apo-cytochromes in a process facilitated by CcmF and CcmH. The protein is Cytochrome c-type biogenesis protein CcmE of Rhodopseudomonas palustris (strain BisB5).